The primary structure comprises 231 residues: 2-C-methyl-D-erythritol 4-phosphate cytidylyltransferase (231 aa).

The protein belongs to the IspD/TarI cytidylyltransferase family. IspD subfamily.

It carries out the reaction 2-C-methyl-D-erythritol 4-phosphate + CTP + H(+) = 4-CDP-2-C-methyl-D-erythritol + diphosphate. It participates in isoprenoid biosynthesis; isopentenyl diphosphate biosynthesis via DXP pathway; isopentenyl diphosphate from 1-deoxy-D-xylulose 5-phosphate: step 2/6. In terms of biological role, catalyzes the formation of 4-diphosphocytidyl-2-C-methyl-D-erythritol from CTP and 2-C-methyl-D-erythritol 4-phosphate (MEP). In Rubrobacter xylanophilus (strain DSM 9941 / JCM 11954 / NBRC 16129 / PRD-1), this protein is 2-C-methyl-D-erythritol 4-phosphate cytidylyltransferase.